A 431-amino-acid chain; its full sequence is Saglin (431 aa).

An N-terminal signal peptide occupies residues 1 to 39 (MSVRDYSGVQVISSRKHRSMSRLPTVLLLLASAAVLAAG). N-linked (GlcNAc...) asparagine glycosylation is present at asparagine 95. Residues 120–169 (LDDAQRQMEQEHRQYAATLEEQLHAAQQETQQEQEMKKALQKQLDALTDS) are a coiled coil.

As to quaternary structure, homodimer. Female salivary gland (at protein level). Not detected in female carcass without salivary glands, midgut and hemolymph (at protein level). Probably not expressed in male tissues.

The protein resides in the secreted. Its function is as follows. (Microbial infection) Facilitates efficient midgut colonization by Plasmodium berghei parasites. Promotes successful transmission of Plasmodium berghei at low infection densities. Functionally, (Microbial infection) Facilitates efficient midgut colonization by Plasmodium falciparum. This is Saglin from Anopheles coluzzii (African malaria mosquito).